A 1574-amino-acid polypeptide reads, in one-letter code: Sterol 3-beta-glucosyltransferase (1574 aa).

Over residues 37–48 (TFLNQNPASPNN) the composition is skewed to polar residues. 2 disordered regions span residues 37-61 (TFLN…NKDE) and 102-170 (ASNA…HSKL). Basic and acidic residues-rich tracts occupy residues 107–121 (EAKD…RSSR) and 128–138 (PEYRREYKLDY). Positions 139 to 148 (DIDESEEDDI) are enriched in acidic residues. Positions 149–170 (ESTRDENTLKPKTEDTSVHSKL) are enriched in basic and acidic residues. In terms of domain architecture, GRAM 1 spans 253 to 288 (DKLKRVFELNDDDYFYGNYNVWLVRDVLLQGHIYLT). Residues 323 to 471 (DVIQSGSLGM…WVNNIVKVVF (149 aa)) enclose the PH domain. Disordered regions lie at residues 389 to 413 (GRND…SGDE), 538 to 559 (RMKK…GNEP), 651 to 722 (ASHR…PVQG), and 774 to 806 (DALS…KKKN). Over residues 692–701 (ITPSKIFSNK) the composition is skewed to polar residues. Over residues 702-711 (SRTESEKSTP) the composition is skewed to basic and acidic residues. Polar residues predominate over residues 712-722 (DRSQTTSPVQG). A GRAM 2 domain is found at 854–920 (RHFQERFSFN…IDVDTCSKEK (67 aa)). The span at 964 to 976 (RESGNESSDDNKS) shows a compositional bias: basic and acidic residues. A disordered region spans residues 964 to 996 (RESGNESSDDNKSAQHGKSGCFQKTPSSAETTK). The segment covering 985 to 996 (FQKTPSSAETTK) has biased composition (polar residues). The UDP-alpha-D-glucose site is built by Ser1057, Arg1058, Asp1060, Asn1333, Ile1364, His1366, His1379, Ser1382, Gly1383, Thr1384, Asp1403, and Gln1404. A disordered region spans residues 1505-1574 (DSDTYDADHD…DNTTVTDANK (70 aa)). The segment covering 1510 to 1533 (DADHDSDKESDHDQTYEQDNHSDY) has biased composition (basic and acidic residues). Over residues 1563 to 1574 (GNDNTTVTDANK) the composition is skewed to polar residues.

Belongs to the glycosyltransferase 28 family.

The protein localises to the cytoplasm. It is found in the membrane. It carries out the reaction a sterol + UDP-alpha-D-glucose = a sterol 3-beta-D-glucoside + UDP + H(+). It catalyses the reaction ergosterol + UDP-alpha-D-glucose = ergosteryl 3-beta-D-glucoside + UDP + H(+). Sterol glycosyltransferase responsible for the glycosylation of ergosterol to form ergosterol-glucoside. This chain is Sterol 3-beta-glucosyltransferase, found in Debaryomyces hansenii (strain ATCC 36239 / CBS 767 / BCRC 21394 / JCM 1990 / NBRC 0083 / IGC 2968) (Yeast).